Consider the following 51-residue polypeptide: uncharacterized protein (51 aa).

Positions 1–51 (MARTNVKLCPPKRSKRPSNSRSKSTSHSNRRSLNSLRRTRTSRRSNNGKFT) are disordered. Over residues 19–36 (NSRSKSTSHSNRRSLNSL) the composition is skewed to low complexity.

This is an uncharacterized protein from Bdellovibrio bacteriovorus (Bacteriophage phiMH2K).